A 618-amino-acid chain; its full sequence is Prothrombin (618 aa).

The first 24 residues, 1–24 (MSHVRGLGLPGCLALAALVSLVHS), serve as a signal peptide directing secretion. Positions 25–43 (QHVFLAPQQALSLLQRVRR) are excised as a propeptide. The region spanning 44–90 (ANSGFLEELRKGNLERECVEEQCSYEEAFEALESPQDTDVFWAKYTV) is the Gla domain. A 4-carboxyglutamate mark is found at E50, E51, E58, E60, E63, E64, E69, E70, E73, and E76. A disulfide bond links C61 and C66. 10 cysteine pairs are disulfide-bonded: C91–C104, C109–C187, C130–C170, C158–C182, C215–C293, C236–C276, C264–C288, C333–C479, C388–C404, and C533–C547. Kringle domains are found at residues 109 to 187 (CAMD…VPVC) and 215 to 292 (CLTE…NLNY). Residues N122 and N144 are each glycosylated (N-linked (GlcNAc...) asparagine). In terms of domain architecture, Peptidase S1 spans 361 to 615 (IVEGWDAEKG…LKRWIQKVID (255 aa)). The active-site Charge relay system is H403. A glycan (N-linked (GlcNAc...) asparagine) is linked at N413. The active-site Charge relay system is D459. The interval 548–570 (AGFKVNDTKRGDACEGDSGGPFV) is high affinity receptor-binding region which is also known as the TP508 peptide. N-linked (GlcNAc...) asparagine glycosylation occurs at N553. A disulfide bridge links C561 with C591. S565 serves as the catalytic Charge relay system.

Belongs to the peptidase S1 family. In terms of assembly, heterodimer (named alpha-thrombin) of a light and a heavy chain; disulfide-linked. Forms a heterodimer with SERPINA5. In plasma, interacts (via N-terminus) with alpha-1-microglobulin; this interaction does not prevent the activation of prothrombin to thrombin. In terms of processing, the gamma-carboxyglutamyl residues, which bind calcium ions, result from the carboxylation of glutamyl residues by a microsomal enzyme, the vitamin K-dependent carboxylase. The modified residues are necessary for the calcium-dependent interaction with a negatively charged phospholipid surface, which is essential for the conversion of prothrombin to thrombin. Post-translationally, in the penultimate step of the coagulation cascade, prothrombin is converted to thrombin by the prothrombinase complex composed of factor Xa (F10), cofactor Va (F5), and phospholipids. This activation requires factor Xa-catalyzed sequential cleavage at 2 sites, Arg-311 and Arg-360, along 2 possible pathways. In the first pathway, the first cleavage occurs at Arg-311, leading to the formation of the inactive intermediate prethrombin-2. This pathway preferentially occurs on platelets and in the absence of cofactor Va. In the second pathway, the first cleavage occurs at Arg-360, which separates protease domain into 2 chains that remain connected through a disulfide bond and generates the active intermediate meizothrombin. The presence of cofactor Va directs activation along the meizothrombin pathway and greatly accelerates the rate of cleavage at Arg-360, but has a smaller effect on the cleavage of meizothrombin at Arg-311. Meizothrombin accumulates as an intermediate when prothrombinase is assembled on the membrane of red blood cells.

It catalyses the reaction Selective cleavage of Arg-|-Gly bonds in fibrinogen to form fibrin and release fibrinopeptides A and B.. Its activity is regulated as follows. Activity is promoted in the presence of negatively charged surfaces, such as polyphosphate and dextran sulfate. Inhibited by SERPINA5. Its function is as follows. Thrombin, which cleaves bonds after Arg and Lys, converts fibrinogen to fibrin and activates factors V, VII, VIII, XIII, and, in complex with thrombomodulin, protein C. Functions in blood homeostasis, inflammation and wound healing. Activates coagulation factor XI (F11); activation is promoted by the contact with negatively charged surfaces. Triggers the production of pro-inflammatory cytokines, such as MCP-1/CCL2 and IL8/CXCL8, in endothelial cells. The sequence is that of Prothrombin (F2) from Mus musculus (Mouse).